The chain runs to 1380 residues: DNA-directed RNA polymerase subunit beta (1380 aa).

Belongs to the RNA polymerase beta chain family. In terms of assembly, the RNAP catalytic core consists of 2 alpha, 1 beta, 1 beta' and 1 omega subunit. When a sigma factor is associated with the core the holoenzyme is formed, which can initiate transcription.

It catalyses the reaction RNA(n) + a ribonucleoside 5'-triphosphate = RNA(n+1) + diphosphate. Functionally, DNA-dependent RNA polymerase catalyzes the transcription of DNA into RNA using the four ribonucleoside triphosphates as substrates. The protein is DNA-directed RNA polymerase subunit beta of Ehrlichia ruminantium (strain Gardel).